The primary structure comprises 229 residues: Ras-related protein Rab-33B (229 aa).

GTP is bound by residues N43, V44, G45, K46, T47, C48, T62, and T65. T47 is a binding site for Mg(2+). Positions 56–68 (GRFPDRTEATIGV) match the Switch 1 motif. Residues T65 and D88 each contribute to the Mg(2+) site. The short motif at 89–108 (TAGQERFRKSMVQHYYRNVH) is the Switch 2 element. GTP-binding residues include G91, N148, K149, D151, A179, and K180. S-geranylgeranyl cysteine attachment occurs at residues C227 and C229. At C229 the chain carries Cysteine methyl ester.

The protein belongs to the small GTPase superfamily. Rab family. As to quaternary structure, interacts (GTP- and GDP-bound forms) with ATG16L1; the complex consists of a tetramer where two RAB33B molecules bind independently one molecule of the ATG16L1 homodimer; the interaction promotes ATG12-ATG5-ATG16L1 complex recruitment to phagophores. Interacts with ATG16L2; however interaction is approximately hundred times lower than for ATG16L1. Interacts with RIC1 (via C-terminus domain); the interaction is direct with a preference for RAB33B-GTP. Interacts with RGP1. Requires Mg(2+) as cofactor. In terms of processing, prenylated. In terms of tissue distribution, ubiquitous.

Its subcellular location is the golgi apparatus membrane. It localises to the golgi apparatus. It is found in the cis-Golgi network. The protein localises to the preautophagosomal structure membrane. The enzyme catalyses GTP + H2O = GDP + phosphate + H(+). Regulated by guanine nucleotide exchange factors (GEFs) which promote the exchange of bound GDP for free GTP. Regulated by GTPase activating proteins (GAPs) such as SGSM2 which increase the GTP hydrolysis activity. Inhibited by GDP dissociation inhibitors (GDIs). The small GTPases Rab are key regulators of intracellular membrane trafficking, from the formation of transport vesicles to their fusion with membranes. Rabs cycle between an inactive GDP-bound form and an active GTP-bound form that is able to recruit to membranes different sets of downstream effectors directly responsible for vesicle formation, movement, tethering and fusion. RAB33B acts, in coordination with RAB6A, to regulate intra-Golgi retrograde trafficking. Participates in autophagosome formation by recruiting the ATG12-ATG5-ATG16L1 complex to phagophores, probably in a nucleotide-independent manner. The protein is Ras-related protein Rab-33B of Mus musculus (Mouse).